The sequence spans 244 residues: Lipoprotein-releasing system ATP-binding protein LolD (244 aa).

The ABC transporter domain occupies isoleucine 19–valine 244. Residue glycine 55–serine 62 participates in ATP binding.

Belongs to the ABC transporter superfamily. Lipoprotein translocase (TC 3.A.1.125) family. As to quaternary structure, the complex is composed of two ATP-binding proteins (LolD) and two transmembrane proteins (LolC and LolE).

The protein localises to the cell inner membrane. Functionally, part of the ABC transporter complex LolCDE involved in the translocation of mature outer membrane-directed lipoproteins, from the inner membrane to the periplasmic chaperone, LolA. Responsible for the formation of the LolA-lipoprotein complex in an ATP-dependent manner. This Xanthomonas euvesicatoria pv. vesicatoria (strain 85-10) (Xanthomonas campestris pv. vesicatoria) protein is Lipoprotein-releasing system ATP-binding protein LolD.